A 352-amino-acid polypeptide reads, in one-letter code: Methylthioribose-1-phosphate isomerase (352 aa).

Residues R49–A51, R93, and Q202 each bind substrate. Residue D243 is the Proton donor of the active site. N253–K254 lines the substrate pocket.

Belongs to the eIF-2B alpha/beta/delta subunits family. MtnA subfamily.

The enzyme catalyses 5-(methylsulfanyl)-alpha-D-ribose 1-phosphate = 5-(methylsulfanyl)-D-ribulose 1-phosphate. The protein operates within amino-acid biosynthesis; L-methionine biosynthesis via salvage pathway; L-methionine from S-methyl-5-thio-alpha-D-ribose 1-phosphate: step 1/6. In terms of biological role, catalyzes the interconversion of methylthioribose-1-phosphate (MTR-1-P) into methylthioribulose-1-phosphate (MTRu-1-P). The sequence is that of Methylthioribose-1-phosphate isomerase from Magnetococcus marinus (strain ATCC BAA-1437 / JCM 17883 / MC-1).